Here is a 320-residue protein sequence, read N- to C-terminus: Na(+)-translocating NADH-quinone reductase subunit C (320 aa).

The chain crosses the membrane as a helical span at residues 16–36 (WYIVSFILGLSLFAGVLLSTI). Threonine 285 is modified (FMN phosphoryl threonine).

This sequence belongs to the NqrC family. As to quaternary structure, composed of six subunits; NqrA, NqrB, NqrC, NqrD, NqrE and NqrF. FMN is required as a cofactor.

The protein resides in the cell inner membrane. The catalysed reaction is a ubiquinone + n Na(+)(in) + NADH + H(+) = a ubiquinol + n Na(+)(out) + NAD(+). Functionally, NQR complex catalyzes the reduction of ubiquinone-1 to ubiquinol by two successive reactions, coupled with the transport of Na(+) ions from the cytoplasm to the periplasm. NqrA to NqrE are probably involved in the second step, the conversion of ubisemiquinone to ubiquinol. The chain is Na(+)-translocating NADH-quinone reductase subunit C from Chlamydia pneumoniae (Chlamydophila pneumoniae).